We begin with the raw amino-acid sequence, 311 residues long: MRRHLSLVLGSLVIGLALLIAPGASWAYPFWAQQNYDSPREATGKIVCANCHIAKKLTQAEVPQSVLPDSVFTASVKVPYEEGIKEIGADGSEVQLQVGAVVMLPDGFTLAPQDRWTDEIKEETEGVYFTQYSDEQPNILLVGPIPGDQNQEIVFPVLSPDPATDSNIHFGKYQIHVGGNRGRGQVYPTGEKSNNTVFTAPAEGKVASIDAGDNGASVVTIQAADGTSTSETIPVGPQLLVNVGDSVAAGDAITNDPNVGGFGQVDAEIVLQNPVRIYGLLAFFAAVAIAQIMLVLKKRQIEKVQAAEGNF.

An N-terminal signal peptide occupies residues 1–27; it reads MRRHLSLVLGSLVIGLALLIAPGASWA. Heme is bound by residues tyrosine 28, cysteine 48, cysteine 51, and histidine 52. A helical transmembrane segment spans residues 277-297; the sequence is IYGLLAFFAAVAIAQIMLVLK.

It belongs to the cytochrome f family. In terms of assembly, the 4 large subunits of the cytochrome b6-f complex are cytochrome b6, subunit IV (17 kDa polypeptide, PetD), cytochrome f and the Rieske protein, while the 4 small subunits are PetG, PetL, PetM and PetN. The complex functions as a dimer. Requires heme as cofactor.

It localises to the cellular thylakoid membrane. Its function is as follows. Component of the cytochrome b6-f complex, which mediates electron transfer between photosystem II (PSII) and photosystem I (PSI), cyclic electron flow around PSI, and state transitions. This is Cytochrome f from Synechococcus sp. (strain CC9902).